The following is a 1578-amino-acid chain: E3 ubiquitin-protein ligase HECW2 (1578 aa).

S48 carries the phosphoserine modification. The C2 domain maps to 171–298 (MEGGASGSLH…LERQAGDQML (128 aa)). Disordered regions lie at residues 341–453 (HTVN…FPTD) and 496–802 (IDDG…PSVR). The span at 386–406 (RTSSTLEIDTEDLISTSSRNS) shows a compositional bias: polar residues. Residues 518–532 (ASIHETASLEERLEN) are compositionally biased toward basic and acidic residues. Over residues 559-576 (SADQGSTELCSSQEVDQP) the composition is skewed to polar residues. The span at 577–593 (TSGADAGASDTSGGSRR) shows a compositional bias: low complexity. 3 stretches are compositionally biased toward polar residues: residues 597-614 (ETES…SSET), 643-664 (SSCN…SSLE), and 688-708 (PTSS…SSLP). Low complexity-rich tracts occupy residues 721–735 (AAEA…ELGE), 746–755 (AAAAAPAAAA), and 769–782 (AQGA…QEEG). Positions 737 to 1074 (WQRRGSLEGA…PRPSSTFNTV (338 aa)) are interaction with TP73. In terms of domain architecture, WW 1 spans 813–846 (EALPPNWEARIDSHGRIFYVDHVNRTTTWQRPTA). Residues 853 to 880 (LQRSNSIQQMEQLNRRYQSIRRTMTNER) adopt a coiled-coil conformation. 2 positions are modified to phosphoserine: S858 and S915. In terms of domain architecture, WW 2 spans 991 to 1024 (LELPRGWEMKHDHQGKAFFVDHNSRTTTFIDPRL). 2 disordered regions span residues 1030 to 1075 (RPTS…NTVS) and 1167 to 1193 (CQSP…RAPA). Residues 1037 to 1046 (HRQHLTRQRS) show a composition bias toward basic residues. The span at 1167-1187 (CQSPRGSPVSSPQNSPGTQRA) shows a compositional bias: polar residues. S1181 is modified (phosphoserine). The HECT domain occupies 1243-1578 (SRKDLQRNKL…VEETSTFGLE (336 aa)). The Glycyl thioester intermediate role is filled by C1546.

Interacts with TP73. Interacts with FZR1.

Its subcellular location is the cytoplasm. The protein localises to the cytoskeleton. It is found in the spindle. The catalysed reaction is S-ubiquitinyl-[E2 ubiquitin-conjugating enzyme]-L-cysteine + [acceptor protein]-L-lysine = [E2 ubiquitin-conjugating enzyme]-L-cysteine + N(6)-ubiquitinyl-[acceptor protein]-L-lysine.. Its pathway is protein modification; protein ubiquitination. E3 ubiquitin-protein ligase that mediates ubiquitination of TP73. Acts to stabilize TP73 and enhance activation of transcription by TP73. Involved in the regulation of mitotic metaphase/anaphase transition. This chain is E3 ubiquitin-protein ligase HECW2 (Hecw2), found in Mus musculus (Mouse).